The following is a 270-amino-acid chain: Formamidopyrimidine-DNA glycosylase (270 aa).

The Schiff-base intermediate with DNA role is filled by Pro-2. The Proton donor role is filled by Glu-3. Lys-58 serves as the catalytic Proton donor; for beta-elimination activity. DNA is bound by residues His-91, Arg-110, and Arg-151. An FPG-type zinc finger spans residues 236 to 270; it reads FVYGRGGENCKVCGTGLREIKLGQRASVYCPRCQS. Arg-260 serves as the catalytic Proton donor; for delta-elimination activity.

Belongs to the FPG family. As to quaternary structure, monomer. Zn(2+) serves as cofactor.

The enzyme catalyses Hydrolysis of DNA containing ring-opened 7-methylguanine residues, releasing 2,6-diamino-4-hydroxy-5-(N-methyl)formamidopyrimidine.. It catalyses the reaction 2'-deoxyribonucleotide-(2'-deoxyribose 5'-phosphate)-2'-deoxyribonucleotide-DNA = a 3'-end 2'-deoxyribonucleotide-(2,3-dehydro-2,3-deoxyribose 5'-phosphate)-DNA + a 5'-end 5'-phospho-2'-deoxyribonucleoside-DNA + H(+). Functionally, involved in base excision repair of DNA damaged by oxidation or by mutagenic agents. Acts as a DNA glycosylase that recognizes and removes damaged bases. Has a preference for oxidized purines, such as 7,8-dihydro-8-oxoguanine (8-oxoG). Has AP (apurinic/apyrimidinic) lyase activity and introduces nicks in the DNA strand. Cleaves the DNA backbone by beta-delta elimination to generate a single-strand break at the site of the removed base with both 3'- and 5'-phosphates. The sequence is that of Formamidopyrimidine-DNA glycosylase from Pseudomonas fluorescens (strain ATCC BAA-477 / NRRL B-23932 / Pf-5).